The chain runs to 286 residues: Ribosome-inactivating protein beta-momorcharin (286 aa).

A signal peptide spans 1–23; the sequence is MVKCLLLSFLIIAIFIGVPTAKG. Asn-74 carries an N-linked (GlcNAc...) asparagine glycan. Catalysis depends on residues Tyr-93, Tyr-132, Glu-181, and Arg-184.

Belongs to the ribosome-inactivating protein family. Type 1 RIP subfamily. Bound to a branched hexasaccharide.

It carries out the reaction Endohydrolysis of the N-glycosidic bond at one specific adenosine on the 28S rRNA.. Its function is as follows. Irreversibly relaxes supercoiled DNA and catalyzes double-stranded breakage. Also acts as a ribosome inactivating protein. The chain is Ribosome-inactivating protein beta-momorcharin (MAP30) from Momordica charantia (Bitter gourd).